A 1345-amino-acid polypeptide reads, in one-letter code: Mediator of RNA polymerase II transcription subunit 13 (1345 aa).

Disordered regions lie at residues Lys-363–Pro-387 and Phe-402–Gly-537. The segment covering Ser-364–Ser-375 has biased composition (low complexity). Positions Pro-406–Leu-415 are enriched in polar residues. A compositionally biased stretch (acidic residues) spans Leu-469 to Leu-482. A compositionally biased stretch (polar residues) spans Ser-486–Gly-501.

The protein belongs to the Mediator complex subunit 13 family. In terms of assembly, component of the SRB8-11 complex, which itself associates with the Mediator complex.

The protein resides in the nucleus. Functionally, component of the SRB8-11 complex. The SRB8-11 complex is a regulatory module of the Mediator complex which is itself involved in regulation of basal and activated RNA polymerase II-dependent transcription. The SRB8-11 complex may be involved in the transcriptional repression of a subset of genes regulated by Mediator. It may inhibit the association of the Mediator complex with RNA polymerase II to form the holoenzyme complex. The polypeptide is Mediator of RNA polymerase II transcription subunit 13 (SSN2) (Candida glabrata (strain ATCC 2001 / BCRC 20586 / JCM 3761 / NBRC 0622 / NRRL Y-65 / CBS 138) (Yeast)).